A 931-amino-acid chain; its full sequence is Adhesion G protein-coupled receptor E1 (931 aa).

Residues 1-27 form the signal peptide; sequence MWGFWLLLFWGFSGMYRWGMTTLPTLG. At 28–644 the chain is on the extracellular side; sequence QTLGGVNECQ…IMASGELTME (617 aa). 2 EGF-like domains span residues 32–80 and 81–132; these read GVNE…VECQ and DVNE…FLCA. 21 disulfides stabilise this stretch: Cys-36–Cys-48, Cys-42–Cys-57, Cys-59–Cys-79, Cys-85–Cys-98, Cys-92–Cys-107, Cys-109–Cys-131, Cys-137–Cys-149, Cys-143–Cys-158, Cys-160–Cys-171, Cys-177–Cys-189, Cys-183–Cys-198, Cys-200–Cys-220, Cys-226–Cys-239, Cys-233–Cys-248, Cys-250–Cys-270, Cys-276–Cys-286, Cys-280–Cys-295, Cys-297–Cys-317, Cys-323–Cys-336, Cys-330–Cys-345, and Cys-347–Cys-366. Residues 133–172 enclose the EGF-like 3; calcium-binding domain; sequence DVDECLTIGICPKYSNCSNSVGSYSCTCQPGFVLNGSICE. N-linked (GlcNAc...) asparagine glycosylation is found at Asn-148 and Asn-167. The 49-residue stretch at 173–221 folds into the EGF-like 4; calcium-binding domain; it reads DEDECVTRDVCPEHATCHNTLGSYYCTCNSGLESSGGGPMFQGLDESCE. An EGF-like 5; calcium-binding domain is found at 222–271; the sequence is DVDECSRNSTLCGPTFICINTLGSYSCSCPAGFSLPTFQILGHPADGNCT. Residue Asn-229 is glycosylated (N-linked (GlcNAc...) asparagine). N-linked (GlcNAc...) asparagine glycans are attached at residues Asn-269 and Asn-283. Residues 272–318 form the EGF-like 6; calcium-binding domain; sequence DIDECDDTCPLNSSCTNTIGSYFCTCHPGFASSNGQLNFKDLEVTCE. An EGF-like 7; calcium-binding domain is found at 319–367; that stretch reads DIDECTQDPLQCGLNSVCTNVPGSYICGCLPDFQMDPEGSQGYGNFNCK. 4 N-linked (GlcNAc...) asparagine glycosylation sites follow: Asn-405, Asn-417, Asn-474, and Asn-498. One can recognise a GAIN-B domain in the interval 482 to 642; that stretch reads EYLDIESKVI…AIIMASGELT (161 aa). The Cell attachment site motif lies at 506 to 508; sequence RGD. Intrachain disulfides connect Cys-595-Cys-624 and Cys-612-Cys-626. Residues 595 to 642 form a GPS region; the sequence is CVSWNTDVEDGRWTPSGCEIVEASETHTVCSCNRMANLAIIMASGELT. Residues 645–672 form a helical membrane-spanning segment; that stretch reads FSLYIISHVGTVISLVCLALAIATFLLC. Residues 673–679 lie on the Cytoplasmic side of the membrane; it reads RAVQNHN. The chain crosses the membrane as a helical span at residues 680–701; the sequence is TYMHLHLCVCLFLAKILFLTGI. Residues 702 to 711 are Extracellular-facing; the sequence is DKTDNQTACA. N-linked (GlcNAc...) asparagine glycosylation occurs at Asn-706. The helical transmembrane segment at 712–735 threads the bilayer; the sequence is IIAGFLHYLFLACFFWMLVEAVML. The Cytoplasmic segment spans residues 736–754; sequence FLMVRNLKVVNYFSSRNIK. Residues 755 to 776 traverse the membrane as a helical segment; sequence MLHLCAFGYGLPVLVVIISASV. Residues 777 to 792 lie on the Extracellular side of the membrane; sequence QPRGYGMHNRCWLNTE. Residues 793-821 traverse the membrane as a helical segment; sequence TGFIWSFLGPVCMIITINSVLLAWTLWVL. The Cytoplasmic segment spans residues 822–839; the sequence is RQKLCSVSSEVSKLKDTR. A helical membrane pass occupies residues 840–859; the sequence is LLTFKAIAQIFILGCSWVLG. At 860-874 the chain is on the extracellular side; the sequence is IFQIGPLASIMAYLF. A helical membrane pass occupies residues 875–897; the sequence is TIINSLQGAFIFLIHCLLNRQVR. The Cytoplasmic portion of the chain corresponds to 898 to 931; it reads DEYKKLLTRKTDLSSHSQTSGILLSSMPSTSKMG.

The protein belongs to the G-protein coupled receptor 2 family. Adhesion G-protein coupled receptor (ADGR) subfamily. In macrophages; but absent from those which are localized within T-cell areas of lymph nodes and spleen. Low level of expression on blood monocytes.

The protein localises to the cell membrane. In terms of biological role, orphan receptor involved in cell adhesion and probably in cell-cell interactions specifically involving cells of the immune system. May play a role in regulatory T-cells (Treg) development. In Mus musculus (Mouse), this protein is Adhesion G protein-coupled receptor E1 (Adgre1).